The following is a 139-amino-acid chain: MLSPKKTKFRKQHRGRMKGSASKGNTIAFGDYALQATEPVWLTSRQIEATRRTITRYVRRGGKLWIRVFPDKPVTARPAETRMGSGKGAPEYWVAVIKPGHILFEITGVPQKTAQQAMKLASYKLPIKTKFIVRNTIES.

Residues 1–17 show a composition bias toward basic residues; that stretch reads MLSPKKTKFRKQHRGRM. Positions 1–23 are disordered; the sequence is MLSPKKTKFRKQHRGRMKGSASK.

Belongs to the universal ribosomal protein uL16 family. As to quaternary structure, part of the 50S ribosomal subunit.

The protein resides in the plastid. The protein localises to the chloroplast. This is Large ribosomal subunit protein uL16c from Porphyra purpurea (Red seaweed).